The following is a 1234-amino-acid chain: DNA-directed RNA polymerase subunit beta (1234 aa).

Residues G1187–G1234 form a disordered region. Acidic residues predominate over residues P1192–G1234.

This sequence belongs to the RNA polymerase beta chain family. As to quaternary structure, the RNAP catalytic core consists of 2 alpha, 1 beta, 1 beta' and 1 omega subunit. When a sigma factor is associated with the core the holoenzyme is formed, which can initiate transcription.

It carries out the reaction RNA(n) + a ribonucleoside 5'-triphosphate = RNA(n+1) + diphosphate. In terms of biological role, DNA-dependent RNA polymerase catalyzes the transcription of DNA into RNA using the four ribonucleoside triphosphates as substrates. The polypeptide is DNA-directed RNA polymerase subunit beta (Caldanaerobacter subterraneus subsp. tengcongensis (strain DSM 15242 / JCM 11007 / NBRC 100824 / MB4) (Thermoanaerobacter tengcongensis)).